A 199-amino-acid polypeptide reads, in one-letter code: LIM domain-containing protein E (199 aa).

Residues Val5–Thr65 enclose the LIM zinc-binding domain. A disordered region spans residues Tyr134 to Gln199. Composition is skewed to low complexity over residues Glu146–Glu155 and Glu163–Tyr174. The segment covering Gln175–Gln199 has biased composition (acidic residues).

May interact with rac1A.

It is found in the cytoplasm. It localises to the cell cortex. Its subcellular location is the nucleus. The protein localises to the cell projection. The protein resides in the lamellipodium. It is found in the filopodium. It localises to the cytoskeleton. In terms of biological role, associates with the actin cytoskeleton and may regulate actin polymerization in lamellipodia, through a rac1-dependent signaling pathway. May play a role in cell motility. Involved in cytokinesis by regulating the microtubule system and linking it to the cortical actin network. This Dictyostelium discoideum (Social amoeba) protein is LIM domain-containing protein E (limE).